Consider the following 235-residue polypeptide: Urease accessory protein UreF (235 aa).

The protein belongs to the UreF family. UreD, UreF and UreG form a complex that acts as a GTP-hydrolysis-dependent molecular chaperone, activating the urease apoprotein by helping to assemble the nickel containing metallocenter of UreC. The UreE protein probably delivers the nickel.

It is found in the cytoplasm. In terms of biological role, required for maturation of urease via the functional incorporation of the urease nickel metallocenter. This Psychrobacter cryohalolentis (strain ATCC BAA-1226 / DSM 17306 / VKM B-2378 / K5) protein is Urease accessory protein UreF.